The primary structure comprises 749 residues: Protein SEY1 homolog 2 (749 aa).

Topologically, residues 1–671 (MIKNYGDRYH…QKHKQDFLQN (671 aa)) are cytoplasmic. One can recognise a GB1/RHD3-type G domain in the interval 40 to 265 (GKNYNIVSII…YEKNVRWSDM (226 aa)). Residue 50–57 (GSQSTGKS) participates in GTP binding. Residues 445–465 (NQLKAFVEAQLATFKQQLDNI) are a coiled coil. A helical membrane pass occupies residues 672–692 (IPKPFWFLLLFFMYDDVLRWM). Topologically, residues 693-695 (GNP) are lumenal. Residues 696–716 (LFLYPILIILCFVGFCIAIGL) traverse the membrane as a helical segment. Over 717–749 (HSLPKLAFQWVFRTLNQAVIPIIFGGISKLKGS) the chain is Cytoplasmic.

It belongs to the TRAFAC class dynamin-like GTPase superfamily. GB1/RHD3 GTPase family. RHD3 subfamily.

It localises to the endoplasmic reticulum membrane. In terms of biological role, probable GTP-binding protein that may be involved in cell development. This Paramecium tetraurelia protein is Protein SEY1 homolog 2.